Reading from the N-terminus, the 265-residue chain is MNRFLLLMSLYLLGSARGTSSQPNELSGSIDHQTSVQQLPGEFFSLENPSDAEALYETSSGLNTLSEHGSSEHGSSKHTVAEHTSGEHAESEHASGEPAATEHAEGEHTVGEQPSGEQPSGEHLSGEQPLSELESGEQPSDEQPSGEHGSGEQPSGEQASGEQPSGEHASGEQASGAPISSTSTGTILNCYTCAYMNDQGKCLRGEGTCITQNSQQCMLKKIFEGGKLQFMVQGCENMCPSMNLFSHGTRMQIICCRNQSFCNKI.

The N-terminal stretch at 1 to 21 is a signal peptide; it reads MNRFLLLMSLYLLGSARGTSS. Residues 62 to 181 form a disordered region; the sequence is LNTLSEHGSS…EQASGAPISS (120 aa). Tandem repeats lie at residues 66-70, 71-75, 85-88, 91-95, 110-114, 115-119, 120-123, 125-129, 135-139, 140-144, 145-148, 150-154, 155-159, 160-164, 165-168, and 170-174. Residues 66–95 form a 3 X 5 AA repeats of S-E-H-[GA]-S region; sequence SEHGSSEHGSSKHTVAEHTSGEHAESEHAS. Positions 69–110 are enriched in basic and acidic residues; it reads GSSEHGSSKHTVAEHTSGEHAESEHASGEPAATEHAEGEHTV. The segment at 85–168 is 4 X 4 AA repeats of S-G-E-H; it reads SGEHAESEHA…ASGEQPSGEH (84 aa). Residues 110-174 form a 9 X 5 AA repeats of [SV]-G-E-Q-[PSA] region; it reads VGEQPSGEQP…SGEHASGEQA (65 aa). A compositionally biased stretch (polar residues) spans 152-163; sequence EQPSGEQASGEQ. Asparagine 258 is a glycosylation site (N-linked (GlcNAc...) asparagine).

Testis.

It is found in the cytoplasmic vesicle. Its subcellular location is the secretory vesicle. It localises to the acrosome. In Homo sapiens (Human), this protein is Acrosomal protein SP-10 (ACRV1).